The chain runs to 556 residues: Genetic interactor of prohibitins 3, mitochondrial (556 aa).

Residues 1-21 (MLNLCHALRGVRQFSCSVIVK) constitute a mitochondrion transit peptide. Positions 113-305 (ESTLNDILNY…LFDLPGYSTS (193 aa)) constitute a CP-type G domain.

Belongs to the TRAFAC class YlqF/YawG GTPase family. GEP3 subfamily.

Its subcellular location is the mitochondrion. Its function is as follows. Interacts genetically with prohibitins and thus may be involved in the mitochondrial lipid metabolism. This is Genetic interactor of prohibitins 3, mitochondrial (GEP3) from Saccharomyces cerevisiae (strain AWRI1631) (Baker's yeast).